Reading from the N-terminus, the 355-residue chain is Adenine deaminase (355 aa).

Residues histidine 23, histidine 25, and histidine 211 each contribute to the Zn(2+) site. Glutamate 214 serves as the catalytic Proton donor. Aspartate 292 lines the Zn(2+) pocket. Substrate is bound at residue aspartate 293.

It belongs to the metallo-dependent hydrolases superfamily. Adenosine and AMP deaminases family. Adenine deaminase type 2 subfamily. The cofactor is Zn(2+).

It is found in the cytoplasm. It localises to the nucleus. It catalyses the reaction adenine + H2O + H(+) = hypoxanthine + NH4(+). Its function is as follows. Catalyzes the hydrolytic deamination of adenine to hypoxanthine. Plays an important role in the purine salvage pathway and in nitrogen catabolism. In Kluyveromyces lactis (strain ATCC 8585 / CBS 2359 / DSM 70799 / NBRC 1267 / NRRL Y-1140 / WM37) (Yeast), this protein is Adenine deaminase.